We begin with the raw amino-acid sequence, 598 residues long: MNELIKHKLELLPDSPGCYLHKDKEGTIIYVGKAKNLKKRVRSYFRGSHDTKTELLVSEIVDFEYIVTESDTEALLLEINLIQKNMPKYNIKLKDDKSYPFLKITNESFPRLVITRYIKKNDGLYFGPYPDSYTANEVKKLLDRIFPFKKCKNPINKVCFYYHLGQCCAHTICHTDKAYWDRLIDDVKHFLNGKDDKIIEDLRSKMLAASEEMAFERAAEYRDLISGIATMRTKQRVMSKDLQDRDIFGYYVDKGWMCVQVFFVRQGKLIQRDVNLFPYYNDAEEDFLTYMGQFYQDKQHFIPKEVFIPEAIDEELVAAIVPTKIIKPKRGEKKQLVALATKNARVSLQQKFDLLEKDIKKTSGAIENLGQLLRIDKPVRIEAFDNSNIQGTSPVAAMVVFVDGKPSKKDYRKFKIKTVVGPDDYASMREVLFRRYSRVKKEGLQAPNLIIVDGGVGQVNVAKDVIEKQLGLTIPVAGLQKNDKHQTHDLLFGNPLEVVSLPRRSEEFFLLHRIQDEVHRFAVTFHRQVRRKNSFSSTLDHISGLGPKRKQLLLRHFKTITAIASATSEEIQALGIPKTVVEAIQQQITDNKNDRSSP.

The GIY-YIG domain occupies 14–91 (DSPGCYLHKD…IQKNMPKYNI (78 aa)). A UVR domain is found at 196 to 231 (DKIIEDLRSKMLAASEEMAFERAAEYRDLISGIATM).

The protein belongs to the UvrC family. In terms of assembly, interacts with UvrB in an incision complex.

Its subcellular location is the cytoplasm. Its function is as follows. The UvrABC repair system catalyzes the recognition and processing of DNA lesions. UvrC both incises the 5' and 3' sides of the lesion. The N-terminal half is responsible for the 3' incision and the C-terminal half is responsible for the 5' incision. In Streptococcus pyogenes serotype M6 (strain ATCC BAA-946 / MGAS10394), this protein is UvrABC system protein C.